Here is a 437-residue protein sequence, read N- to C-terminus: 26S proteasome regulatory subunit 4 homolog (437 aa).

The tract at residues 1-47 (MGQGVSSGQDKKKKKGSNQKPKYEPPVQSKFGRKKRKGGPATAEKLP) is disordered. A lipid anchor (N-myristoyl glycine) is attached at Gly2. 223 to 230 (GAPGTGKT) is an ATP binding site. Residues Lys234, Lys255, and Lys290 each participate in a glycyl lysine isopeptide (Lys-Gly) (interchain with G-Cter in ubiquitin) cross-link.

This sequence belongs to the AAA ATPase family.

It localises to the cytoplasm. It is found in the nucleus. In terms of biological role, the 26S proteasome is involved in the ATP-dependent degradation of ubiquitinated proteins. The regulatory (or ATPase) complex confers ATP dependency and substrate specificity to the 26S complex. Has ATPase activity. This Saccharomyces cerevisiae (strain ATCC 204508 / S288c) (Baker's yeast) protein is 26S proteasome regulatory subunit 4 homolog (RPT2).